We begin with the raw amino-acid sequence, 147 residues long: Sentan (147 aa).

Positions 1–32 (MGGCMHSTQDKSLHLEGDPNPSAAPTSTCAPR) are disordered. Residues 8–17 (TQDKSLHLEG) are compositionally biased toward basic and acidic residues.

Belongs to the S-100 family.

The protein resides in the cell projection. It is found in the cilium. May be a component of the linker structure that bridges the ciliary membrane and peripheral singlet microtubules. In Homo sapiens (Human), this protein is Sentan (SNTN).